The chain runs to 496 residues: tRNA modification GTPase mss1, mitochondrial (496 aa).

The N-terminal 19 residues, 1–19, are a transit peptide targeting the mitochondrion; it reads MRILNRVFLNTFQACFRRF. The region spanning 239 to 416 is the TrmE-type G domain; that stretch reads GINVAILGPS…FLQALSSTFE (178 aa). GTP is bound by residues 246-253, 293-297, and 363-366; these read GPSNAGKS, DTAGL, and NKVD.

This sequence belongs to the TRAFAC class TrmE-Era-EngA-EngB-Septin-like GTPase superfamily. TrmE GTPase family.

Its subcellular location is the mitochondrion. Its function is as follows. GTPase involved in the 5-carboxymethylaminomethyl modification (mnm(5)s(2)U34) of the wobble uridine base in mitochondrial tRNAs. The polypeptide is tRNA modification GTPase mss1, mitochondrial (mss1) (Schizosaccharomyces pombe (strain 972 / ATCC 24843) (Fission yeast)).